Reading from the N-terminus, the 238-residue chain is 1-(5-phosphoribosyl)-5-[(5-phosphoribosylamino)methylideneamino] imidazole-4-carboxamide isomerase (238 aa).

The Proton acceptor role is filled by Asp8. The active-site Proton donor is Asp129.

This sequence belongs to the HisA/HisF family.

Its subcellular location is the cytoplasm. It carries out the reaction 1-(5-phospho-beta-D-ribosyl)-5-[(5-phospho-beta-D-ribosylamino)methylideneamino]imidazole-4-carboxamide = 5-[(5-phospho-1-deoxy-D-ribulos-1-ylimino)methylamino]-1-(5-phospho-beta-D-ribosyl)imidazole-4-carboxamide. It functions in the pathway amino-acid biosynthesis; L-histidine biosynthesis; L-histidine from 5-phospho-alpha-D-ribose 1-diphosphate: step 4/9. The chain is 1-(5-phosphoribosyl)-5-[(5-phosphoribosylamino)methylideneamino] imidazole-4-carboxamide isomerase from Anaeromyxobacter dehalogenans (strain 2CP-1 / ATCC BAA-258).